Reading from the N-terminus, the 146-residue chain is Keratin-associated protein 12-2 (146 aa).

Tandem repeats lie at residues 10 to 14, 15 to 19, 20 to 24, 25 to 29, 34 to 38, 40 to 44, 45 to 49, 55 to 59, 60 to 64, 65 to 69, 70 to 74, 75 to 79, 80 to 84, 85 to 89, 90 to 94, 95 to 99, 100 to 104, 105 to 109, 110 to 114, 120 to 124, 125 to 129, 130 to 134, and 135 to 139. Residues 10 to 139 form a 23 X 5 AA approximate repeats region; it reads CQPACCAPSP…CTSVLCRPIS (130 aa).

It belongs to the KRTAP type 12 family. In terms of assembly, interacts with hair keratins. In terms of tissue distribution, restricted to a narrow region of the hair fiber cuticle, lying approximately 20 cell layers above the apex of the dermal papilla of the hair root; not detected in any other tissues.

Its function is as follows. In the hair cortex, hair keratin intermediate filaments are embedded in an interfilamentous matrix, consisting of hair keratin-associated proteins (KRTAP), which are essential for the formation of a rigid and resistant hair shaft through their extensive disulfide bond cross-linking with abundant cysteine residues of hair keratins. The matrix proteins include the high-sulfur and high-glycine-tyrosine keratins. This is Keratin-associated protein 12-2 (KRTAP12-2) from Homo sapiens (Human).